The chain runs to 1001 residues: RNA-binding protein 12B (1001 aa).

Phosphoserine is present on residues Ser-98, Ser-101, and Ser-112. Lys-114 is covalently cross-linked (Glycyl lysine isopeptide (Lys-Gly) (interchain with G-Cter in SUMO2)). Residues 119–128 (NSGYGSSINQ) are compositionally biased toward polar residues. Residues 119–147 (NSGYGSSINQDAGFHTNGTGHGNLRPRKT) form a disordered region. A Glycyl lysine isopeptide (Lys-Gly) (interchain with G-Cter in SUMO2) cross-link involves residue Lys-151. The RRM 1 domain maps to 155 to 230 (PYLFLRGLPY…RFIEVMQGSE (76 aa)). Residues 247–262 (LRRSEEHSPPRGINDR) are compositionally biased toward basic and acidic residues. Residues 247-278 (LRRSEEHSPPRGINDRHFRKRSHSKSPRRTRS) form a disordered region. Residues Ser-250 and Ser-254 each carry the phosphoserine modification. Basic residues predominate over residues 263–278 (HFRKRSHSKSPRRTRS). A Phosphothreonine modification is found at Thr-276. 4 positions are modified to phosphoserine: Ser-278, Ser-280, Ser-292, and Ser-294. In terms of domain architecture, RRM 2 spans 284–360 (FYVHLKNLSL…RPVHIDPISR (77 aa)). Residue Lys-319 is modified to N6-acetyllysine. Residue Lys-335 forms a Glycyl lysine isopeptide (Lys-Gly) (interchain with G-Cter in SUMO2) linkage. Ser-377 is modified (phosphoserine). In terms of domain architecture, RRM 3 spans 400–477 (LCIYIRNFPF…TEVLLRLISE (78 aa)). Residues Lys-514 and Lys-541 each participate in a glycyl lysine isopeptide (Lys-Gly) (interchain with G-Cter in SUMO2) cross-link. The interval 544–587 (QRDFRQPDRHPPEDFRHSSEDFRFPPEDFRHSPEDFRRPREEDF) is disordered. Phosphoserine is present on residues Ser-575, Ser-591, and Ser-638. Residues 631 to 881 (LEEDFRRSPT…FRSPPDDFRS (251 aa)) are compositionally biased toward basic and acidic residues. The segment at 631-882 (LEEDFRRSPT…RSPPDDFRSH (252 aa)) is disordered. A Phosphothreonine modification is found at Thr-640. Ser-710 and Ser-718 each carry phosphoserine. Lys-895 participates in a covalent cross-link: Glycyl lysine isopeptide (Lys-Gly) (interchain with G-Cter in SUMO2). An RRM 4 domain is found at 925–1001 (TPIKIMNLPF…GPRKVKLTLL (77 aa)).

This is RNA-binding protein 12B (RBM12B) from Homo sapiens (Human).